The primary structure comprises 266 residues: Beta-lactamase OXA-11 (266 aa).

The signal sequence occupies residues 1–20; sequence MKTFAAYVIIACLSSTALAG. The Acyl-ester intermediate role is filled by Ser67. At Lys70 the chain carries N6-carboxylysine. 205 to 207 contacts substrate; the sequence is KTG.

The protein belongs to the class-D beta-lactamase family.

It carries out the reaction a beta-lactam + H2O = a substituted beta-amino acid. Hydrolyzes carbenicillin, oxacillin and cephalosporin. Does not hydrolyze cefoxitin or carbapenems. In Pseudomonas aeruginosa, this protein is Beta-lactamase OXA-11 (bla).